The following is a 928-amino-acid chain: Interphotoreceptor matrix proteoglycan 1 (928 aa).

The signal sequence occupies residues 1 to 20; it reads MHLKTGLIFLAICLALQVQG. A disordered region spans residues 26–50; that stretch reads SKTNHGEAKQLADASGSDKTERTTK. Basic and acidic residues predominate over residues 29 to 49; it reads NHGEAKQLADASGSDKTERTT. An N-linked (GlcNAc...) asparagine glycan is attached at asparagine 143. Positions 164-182 are enriched in basic and acidic residues; that stretch reads QERKDEISTDKTGGKKLED. The segment at 164–191 is disordered; it reads QERKDEISTDKTGGKKLEDIPSVSTGPP. 2 N-linked (GlcNAc...) asparagine glycosylation sites follow: asparagine 203 and asparagine 212. Residues 231 to 356 form the SEA 1 domain; the sequence is AEQMVEFSVT…TKLTVTDLQQ (126 aa). Disordered stretches follow at residues 441 to 481 and 494 to 522; these read LSRE…TEDI and ALVS…NDLI. Positions 466–477 are enriched in basic and acidic residues; sequence PSREPPHDRSPD. In terms of domain architecture, SEA 2 spans 735-848; it reads KELVVFFSLR…YSLDIEPADQ (114 aa). 2 N-linked (GlcNAc...) asparagine glycosylation sites follow: asparagine 756 and asparagine 780. The Heparin- and hyaluronan-binding motif lies at 785-793; sequence KQLEILNFR. Asparagine 794 and asparagine 812 each carry an N-linked (GlcNAc...) asparagine glycan.

Highly glycosylated (N- and O-linked carbohydrates and sialic acid). In terms of tissue distribution, abundantly expressed in the retina (at protein level). Localizes to the photoreceptor layer of the interphotoreceptor matrix of the retina (at protein level).

Its subcellular location is the cell projection. It localises to the cilium. The protein resides in the photoreceptor outer segment. The protein localises to the secreted. It is found in the extracellular space. Its subcellular location is the extracellular matrix. It localises to the interphotoreceptor matrix. The protein resides in the photoreceptor inner segment. Functionally, chondroitin sulfate-, heparin- and hyaluronan-binding protein. May serve to form a basic macromolecular scaffold comprising the insoluble interphotoreceptor matrix. The sequence is that of Interphotoreceptor matrix proteoglycan 1 from Gallus gallus (Chicken).